We begin with the raw amino-acid sequence, 125 residues long: Aspercryptin biosynthesis cluster protein K (125 aa).

The disordered stretch occupies residues 104–125 (QRAESVAGDSRPREHRQGAVGY). Positions 113 to 125 (SRPREHRQGAVGY) are enriched in basic and acidic residues.

It functions in the pathway secondary metabolite biosynthesis. Part of the gene cluster that mediates the biosynthesis of aspercryptins, linear lipopeptides built from six amino acids including 2 highly unusual and nonproteogenic amino acids, 2-amino-octanoic acid (2aoa) and 2-amino-dodecanol (2adol). The core structure of aspercryptins is as follows: Ser/Ala-Thr-Ile/Val-2aoa-Asn-2adol. The first step of aspercryptin biosynthesis is the generation of the fatty acid precursors, octanoic and dodecanoic acids, by the FAS subunits atnF and atnM. The fatty acid precursors are likely transformed into the corresponding alpha-amino fatty acids in three steps. First, they are hydroxylated by the cytochrome P450 monooxygenase atnE, then oxidized to the corresponding alpha-keto acids by the NAD(P)-dependent oxidoreductase atnD, and finally converted to the alpha-amino fatty acids by the PLP-dependent aminotransferases atnH or atnJ. the alpha-amino fatty acids, 2-amino-octanoic and 2-amino-dodecanoic acids, are recognized, activated, and covalently tethered to the NRPS atnA by its fourth and sixth adenylation domains. The second module of atnA is the Thr module and contains an epimerase (E) domain responsible for the epimerization of Thr to D-allo-Thr. Additionally, despite atnA having only one epimerase domain, the first amino acid of aspercryptin A1 is D-Ser, suggesting that serine is either loaded directly as D-Ser on the first module or that the epimerase domain in the threonine module epimerizes both L-Ser and L-Thr. After condensation of the hexapeptide of aspercryptin, the C-terminal reductase (TE) domain might be involved in the reductive release and production of the aldehyde hexapeptide. Further reduction would generate aspercryptins. The variety of aspercryptins produced reflects the flexibility of the atnA NRPS, allowing incorporation of alanine instead of serine, valine for isoleucine, and a C10 fatty amino alcohol instead of the C12 version. AtnB seems to be involved in the selectivity for Ile versus Val by the third module. Moreover, type B, C and D aspercryptins have an additional N-terminal cichorine, acetyl and propionyl group respectively. This Emericella nidulans (strain FGSC A4 / ATCC 38163 / CBS 112.46 / NRRL 194 / M139) (Aspergillus nidulans) protein is Aspercryptin biosynthesis cluster protein K.